A 507-amino-acid chain; its full sequence is ATP synthase subunit alpha, chloroplastic (507 aa).

170–177 (GDRQTGKT) serves as a coordination point for ATP.

The protein belongs to the ATPase alpha/beta chains family. F-type ATPases have 2 components, CF(1) - the catalytic core - and CF(0) - the membrane proton channel. CF(1) has five subunits: alpha(3), beta(3), gamma(1), delta(1), epsilon(1). CF(0) has four main subunits: a, b, b' and c.

It localises to the plastid. The protein localises to the chloroplast thylakoid membrane. It carries out the reaction ATP + H2O + 4 H(+)(in) = ADP + phosphate + 5 H(+)(out). In terms of biological role, produces ATP from ADP in the presence of a proton gradient across the membrane. The alpha chain is a regulatory subunit. The protein is ATP synthase subunit alpha, chloroplastic of Ipomoea purpurea (Common morning glory).